We begin with the raw amino-acid sequence, 330 residues long: Aspartate--ammonia ligase (330 aa).

This sequence belongs to the class-II aminoacyl-tRNA synthetase family. AsnA subfamily.

It is found in the cytoplasm. The enzyme catalyses L-aspartate + NH4(+) + ATP = L-asparagine + AMP + diphosphate + H(+). The protein operates within amino-acid biosynthesis; L-asparagine biosynthesis; L-asparagine from L-aspartate (ammonia route): step 1/1. The protein is Aspartate--ammonia ligase of Histophilus somni (strain 2336) (Haemophilus somnus).